The following is a 394-amino-acid chain: Guanine nucleotide-binding protein G(s) subunit alpha (394 aa).

The segment at 1 to 25 (MGCLGDSKTEDQRNEEKAQREANKK) is disordered. The N-palmitoyl glycine moiety is linked to residue G2. C3 is lipidated: S-palmitoyl cysteine. The span at 7 to 25 (SKTEDQRNEEKAQREANKK) shows a compositional bias: basic and acidic residues. The G-alpha domain maps to 39-394 (ATHRLLLLGA…RMHLRQYELL (356 aa)). Residues 42-55 (RLLLLGAGESGKST) are G1 motif. GTP is bound at residue 47–55 (GAGESGKST). Mg(2+) is bound at residue S54. The tract at residues 68-90 (FNGEGGEEDPQAARSNSDGEKAT) is disordered. Residues 196 to 204 (DLLRCRVLT) form a G2 motif region. GTP-binding positions include 197–204 (LLRCRVLT), 223–227 (DVGGQ), 292–295 (NKQD), and A366. Residue T204 coordinates Mg(2+). Residues 219-228 (FHMFDVGGQR) are G3 motif. Positions 288 to 295 (ILFLNKQD) are G4 motif. A G5 motif region spans residues 364 to 369 (TCAVDT).

The protein belongs to the G-alpha family. G(s) subfamily. In terms of assembly, heterotrimeric G proteins are composed of 3 units; alpha, beta and gamma. The alpha chain contains the guanine nucleotide binding site. Interacts with CRY1; the interaction may block GPCR-mediated regulation of cAMP concentrations. Interacts with ADCY6 and stimulates its adenylyl cyclase activity. Interacts with ADCY2 and ADCY5. Stimulates the ADCY5 adenylyl cyclase activity. Interaction with SASH1.

It is found in the cell membrane. Functionally, guanine nucleotide-binding proteins (G proteins) function as transducers in numerous signaling pathways controlled by G protein-coupled receptors (GPCRs). Signaling involves the activation of adenylyl cyclases, resulting in increased levels of the signaling molecule cAMP. GNAS functions downstream of several GPCRs, including beta-adrenergic receptors. Stimulates the Ras signaling pathway via RAPGEF2. The polypeptide is Guanine nucleotide-binding protein G(s) subunit alpha (GNAS) (Cricetulus longicaudatus (Long-tailed dwarf hamster)).